Reading from the N-terminus, the 368-residue chain is D-alanine--D-alanine ligase (368 aa).

The region spanning 141–350 (KMIWDYSGLP…YNELIMHLIE (210 aa)) is the ATP-grasp domain. ATP is bound at residue 176 to 231 (EKDLEYPLFIKPCRAGSSVGAGMVKNRNELLEQAEESFLWDNKILVEACIEAREVE). The Mg(2+) site is built by D303, E317, and N319.

This sequence belongs to the D-alanine--D-alanine ligase family. It depends on Mg(2+) as a cofactor. Requires Mn(2+) as cofactor.

The protein localises to the cytoplasm. The enzyme catalyses 2 D-alanine + ATP = D-alanyl-D-alanine + ADP + phosphate + H(+). It participates in cell wall biogenesis; peptidoglycan biosynthesis. Functionally, cell wall formation. In Treponema denticola (strain ATCC 35405 / DSM 14222 / CIP 103919 / JCM 8153 / KCTC 15104), this protein is D-alanine--D-alanine ligase.